A 301-amino-acid polypeptide reads, in one-letter code: Cell division protein kinase 2 homolog CRK1 (301 aa).

The 293-residue stretch at tyrosine 5–phenylalanine 297 folds into the Protein kinase domain. ATP contacts are provided by residues isoleucine 11–valine 19 and lysine 34. Catalysis depends on aspartate 127, which acts as the Proton acceptor. Position 160 is a phosphothreonine; by CAK (threonine 160).

This sequence belongs to the protein kinase superfamily. CMGC Ser/Thr protein kinase family. CDC2/CDKX subfamily. As to quaternary structure, forms a stable but non-covalent complex with a regulatory subunit and with a cyclin.

The enzyme catalyses [DNA-directed RNA polymerase] + ATP = phospho-[DNA-directed RNA polymerase] + ADP + H(+). Its activity is regulated as follows. Phosphorylation at Thr-15 or Tyr-16 inactivates the enzyme, while phosphorylation at Thr-160 activates it. Its function is as follows. May be involved in some stage-specific role in the promastigote cell cycle. The chain is Cell division protein kinase 2 homolog CRK1 (CRK1) from Leishmania mexicana.